Here is a 286-residue protein sequence, read N- to C-terminus: Shikimate dehydrogenase (NADP(+)) (286 aa).

Shikimate-binding positions include 19–21 and Thr-66; that span reads SVS. The active-site Proton acceptor is the Lys-70. Positions 91 and 106 each coordinate shikimate. Residues 130-134 and Ala-225 contribute to the NADP(+) site; that span reads GAGGS. Tyr-227 contributes to the shikimate binding site. An NADP(+)-binding site is contributed by Gly-248.

The protein belongs to the shikimate dehydrogenase family. As to quaternary structure, homodimer.

The catalysed reaction is shikimate + NADP(+) = 3-dehydroshikimate + NADPH + H(+). The protein operates within metabolic intermediate biosynthesis; chorismate biosynthesis; chorismate from D-erythrose 4-phosphate and phosphoenolpyruvate: step 4/7. Involved in the biosynthesis of the chorismate, which leads to the biosynthesis of aromatic amino acids. Catalyzes the reversible NADPH linked reduction of 3-dehydroshikimate (DHSA) to yield shikimate (SA). This chain is Shikimate dehydrogenase (NADP(+)), found in Dehalococcoides mccartyi (strain ATCC BAA-2100 / JCM 16839 / KCTC 5957 / BAV1).